We begin with the raw amino-acid sequence, 505 residues long: Trans-cinnamate 4-monooxygenase (505 aa).

A helical transmembrane segment spans residues 3 to 23 (LLLLEKTLLGLFLAAVVAIVV). Residues 213–218 (RSRLAQ) and A306 each bind (E)-cinnamate. Position 447 (C447) interacts with heme.

It belongs to the cytochrome P450 family. It depends on heme as a cofactor.

Its subcellular location is the membrane. It carries out the reaction (E)-cinnamate + reduced [NADPH--hemoprotein reductase] + O2 = (E)-4-coumarate + oxidized [NADPH--hemoprotein reductase] + H2O + H(+). It functions in the pathway phenylpropanoid metabolism; trans-4-coumarate biosynthesis; trans-4-coumarate from trans-cinnamate: step 1/1. Functionally, catalyzes the first oxidative step of the phenylpropanoid pathway in higher plants by transforming trans-cinnamate into p-coumarate. The compounds formed by this pathway are essential components for lignification, pollination, and defense against ultraviolet light, predators and pathogens. This Vigna radiata var. radiata (Mung bean) protein is Trans-cinnamate 4-monooxygenase (CYP73A2).